The chain runs to 418 residues: Serine--tRNA ligase (418 aa).

231–233 provides a ligand contact to L-serine; it reads TAE. 262–264 contributes to the ATP binding site; that stretch reads RSE. E285 contacts L-serine. 349 to 352 lines the ATP pocket; that stretch reads EISS. S385 is a binding site for L-serine.

This sequence belongs to the class-II aminoacyl-tRNA synthetase family. Type-1 seryl-tRNA synthetase subfamily. In terms of assembly, homodimer. The tRNA molecule binds across the dimer.

It localises to the cytoplasm. The enzyme catalyses tRNA(Ser) + L-serine + ATP = L-seryl-tRNA(Ser) + AMP + diphosphate + H(+). It catalyses the reaction tRNA(Sec) + L-serine + ATP = L-seryl-tRNA(Sec) + AMP + diphosphate + H(+). It participates in aminoacyl-tRNA biosynthesis; selenocysteinyl-tRNA(Sec) biosynthesis; L-seryl-tRNA(Sec) from L-serine and tRNA(Sec): step 1/1. Catalyzes the attachment of serine to tRNA(Ser). Is also able to aminoacylate tRNA(Sec) with serine, to form the misacylated tRNA L-seryl-tRNA(Sec), which will be further converted into selenocysteinyl-tRNA(Sec). In Ureaplasma parvum serovar 3 (strain ATCC 27815 / 27 / NCTC 11736), this protein is Serine--tRNA ligase.